Here is a 339-residue protein sequence, read N- to C-terminus: uncharacterized protein (339 aa).

To bacterial alkanal monooxygenase alpha and beta chains.

This is an uncharacterized protein from Bacillus subtilis (strain 168).